A 102-amino-acid chain; its full sequence is UPF0147 protein MTH_1407 (102 aa).

The protein belongs to the UPF0147 family.

The chain is UPF0147 protein MTH_1407 from Methanothermobacter thermautotrophicus (strain ATCC 29096 / DSM 1053 / JCM 10044 / NBRC 100330 / Delta H) (Methanobacterium thermoautotrophicum).